Here is a 28-residue protein sequence, read N- to C-terminus: ELISNSSDALDKTNNSLTIIDSGIGMTK.

Residues asparagine 5 and aspartate 21 each coordinate ATP.

This sequence belongs to the heat shock protein 90 family. Homodimer.

It localises to the cytoplasm. Putative molecular chaperone that may promote the maturation, structural maintenance and proper regulation of specific target proteins. The polypeptide is Heat shock protein 81 (Pseudotsuga menziesii (Douglas-fir)).